The chain runs to 130 residues: Small ribosomal subunit protein uS11 (130 aa).

Belongs to the universal ribosomal protein uS11 family. As to quaternary structure, part of the 30S ribosomal subunit. Interacts with proteins S7 and S18. Binds to IF-3.

Located on the platform of the 30S subunit, it bridges several disparate RNA helices of the 16S rRNA. Forms part of the Shine-Dalgarno cleft in the 70S ribosome. The chain is Small ribosomal subunit protein uS11 from Shewanella amazonensis (strain ATCC BAA-1098 / SB2B).